The primary structure comprises 311 residues: Malate dehydrogenase (311 aa).

Residues 7–13 and Asp34 each bind NAD(+); that span reads GAAGGIG. Residues Arg81 and Arg87 each coordinate substrate. NAD(+) is bound by residues Asn94 and 117-119; that span reads ITN. Asn119 and Arg153 together coordinate substrate. His177 acts as the Proton acceptor in catalysis. Residue Met227 participates in NAD(+) binding.

The protein belongs to the LDH/MDH superfamily. MDH type 1 family. In terms of assembly, homodimer.

It carries out the reaction (S)-malate + NAD(+) = oxaloacetate + NADH + H(+). Catalyzes the reversible oxidation of malate to oxaloacetate. The protein is Malate dehydrogenase of Pseudoalteromonas atlantica (strain T6c / ATCC BAA-1087).